Here is a 1189-residue protein sequence, read N- to C-terminus: Magnesium-chelatase subunit H (1189 aa).

Belongs to the Mg-chelatase subunit H family.

It carries out the reaction protoporphyrin IX + Mg(2+) + ATP + H2O = Mg-protoporphyrin IX + ADP + phosphate + 3 H(+). The protein operates within porphyrin-containing compound metabolism; bacteriochlorophyll biosynthesis (light-independent). Its function is as follows. Involved in bacteriochlorophyll pigment biosynthesis; introduces a magnesium ion into protoporphyrin IX to yield Mg-protoroporphyrin IX. This Rhodobacter capsulatus (strain ATCC BAA-309 / NBRC 16581 / SB1003) protein is Magnesium-chelatase subunit H (bchH).